Reading from the N-terminus, the 934-residue chain is Oxysterol-binding protein-related protein 6 (934 aa).

The segment at 1 to 62 (MSSDEKGISP…RQLLEPEPVP (62 aa)) is disordered. Residue S2 is modified to N-acetylserine. Low complexity predominate over residues 14–29 (TSTPTHRSASSSTSSQ). A compositionally biased stretch (basic and acidic residues) spans 30-40 (RDSRQSIHILE). Phosphoserine is present on S35. The segment covering 42–53 (TASSSTEPSVSR) has biased composition (polar residues). The region spanning 86–181 (PDKHEGFMLK…WVSKLRHHRL (96 aa)) is the PH domain. A phosphoserine mark is found at S190 and S290.

It belongs to the OSBP family. In terms of assembly, homodimer. Interacts with OSBPL3. In terms of tissue distribution, expressed in brain and striated muscle (at protein level). Widely expressed. Expressed in skeletal muscle.

It localises to the cytoplasm. The protein localises to the cytosol. Its subcellular location is the endoplasmic reticulum membrane. The protein resides in the nucleus envelope. It is found in the cell membrane. It localises to the endosome membrane. In terms of biological role, regulates cellular transport and efflux of cholesterol. Plays a role in phosphatidylinositol-4-phophate (PI4P) turnover at the neuronal membrane. Binds via its PH domain PI4P, phosphatidylinositol-4,5-diphosphate, phosphatidylinositol-3,4,5-triphosphate, and phosphatidic acid. Weakly binds 25-hydroxycholesterol. In Homo sapiens (Human), this protein is Oxysterol-binding protein-related protein 6 (OSBPL6).